Reading from the N-terminus, the 479-residue chain is UDP-N-acetylmuramate--L-alanine ligase (479 aa).

124-130 (GSHGKTT) lines the ATP pocket.

It belongs to the MurCDEF family.

The protein localises to the cytoplasm. The enzyme catalyses UDP-N-acetyl-alpha-D-muramate + L-alanine + ATP = UDP-N-acetyl-alpha-D-muramoyl-L-alanine + ADP + phosphate + H(+). It functions in the pathway cell wall biogenesis; peptidoglycan biosynthesis. In terms of biological role, cell wall formation. This Synechococcus sp. (strain RCC307) protein is UDP-N-acetylmuramate--L-alanine ligase.